An 828-amino-acid polypeptide reads, in one-letter code: Conserved oligomeric Golgi complex subunit 3 (828 aa).

Ala2 carries the N-acetylalanine modification. Residues 504 to 543 (DEQKKVPSEASFSDVHLEEGESNSLTKSGSTESLNPRPQT) are disordered. Residues 525 to 543 (SNSLTKSGSTESLNPRPQT) are compositionally biased toward polar residues. Phosphoserine is present on Ser663.

This sequence belongs to the COG3 family. As to quaternary structure, component of the conserved oligomeric Golgi complex which is composed of eight different subunits and is required for normal Golgi morphology and localization. Interacts with TMEM115. In terms of tissue distribution, widely expressed with highest levels in pancreas and testis and lowest levels in lung.

It localises to the golgi apparatus. The protein localises to the golgi stack membrane. Its function is as follows. Involved in ER-Golgi transport. Also involved in retrograde (Golgi to ER) transport. The chain is Conserved oligomeric Golgi complex subunit 3 (COG3) from Homo sapiens (Human).